Reading from the N-terminus, the 289-residue chain is ATP synthase gamma chain (289 aa).

Belongs to the ATPase gamma chain family. In terms of assembly, F-type ATPases have 2 components, CF(1) - the catalytic core - and CF(0) - the membrane proton channel. CF(1) has five subunits: alpha(3), beta(3), gamma(1), delta(1), epsilon(1). CF(0) has three main subunits: a, b and c.

The protein localises to the cell membrane. Functionally, produces ATP from ADP in the presence of a proton gradient across the membrane. The gamma chain is believed to be important in regulating ATPase activity and the flow of protons through the CF(0) complex. This is ATP synthase gamma chain from Alkaliphilus metalliredigens (strain QYMF).